The sequence spans 892 residues: Dystroglycan 1 (892 aa).

A signal peptide spans 1–27 (MRMSAGLSLLLPLWGRTFLLLLSVAMA). Over 28–750 (QSHWPSEAGR…SSEDDVYLHT (723 aa)) the chain is Extracellular. Positions 30–405 (HWPSEAGRDW…GQIRPTMTIP (376 aa)) are required for laminin recognition. The segment at 46-68 (SMHSVLSDLHEAVPTVVGIPDGI) is O-glycosylated at one site. A glycan (N-linked (GlcNAc...) asparagine) is linked at asparagine 138. Cysteine 179 and cysteine 261 are joined by a disulfide. Positions 313–482 (ATPTPVTAIG…PPTRIRTTTS (170 aa)) are mucin-like domain. 3 O-linked (Man6P...) threonine glycosylation sites follow: threonine 314, threonine 316, and threonine 376. A disordered region spans residues 378 to 497 (TLGPIQPTRV…GEPNQRPELK (120 aa)). Over residues 410 to 444 (PTAVATPPTTTTKKPRVSTPKPATPSTDSSTTTTR) the composition is skewed to low complexity. Residues 460–482 (TTKAPITRLETASPPTRIRTTTS) form an O-glycosylated at seven sites with GalNAc region. Residues 600–709 (RAPARFKAKF…SSIAVTGSGS (110 aa)) enclose the Peptidase S72 domain. N-linked (GlcNAc...) asparagine glycans are attached at residues asparagine 638, asparagine 646, and asparagine 658. Cysteines 666 and 710 form a disulfide. Residues 721–742 (PRRVPSEVPSTDVPDRDPEKSS) form a disordered region. A compositionally biased stretch (basic and acidic residues) spans 733 to 742 (VPDRDPEKSS). The helical transmembrane segment at 751-771 (VIPAVVVAAILLIAGIIAMIC) threads the bilayer. The Cytoplasmic segment spans residues 772 to 892 (YRKKRKGKLT…YRSPPPYVPP (121 aa)). Residues 773-779 (RKKRKGK) carry the Nuclear localization signal motif. The residue at position 787 (threonine 787) is a Phosphothreonine. The tract at residues 816 to 892 (LQEEKAPLPP…YRSPPPYVPP (77 aa)) is required for interaction with CAV3. A disordered region spans residues 820–892 (KAPLPPPEYP…YRSPPPYVPP (73 aa)). Residues 829–843 (PNQSVPETTPLNQDT) show a composition bias toward polar residues. Residues 856 to 867 (NAPPYQPPPPFT) are compositionally biased toward pro residues. Residues 877–892 (PKNMTPYRSPPPYVPP) are required for binding DMD and UTRN. A PPXY motif motif is present at residues 886–889 (PPPY). Phosphotyrosine; by SRC is present on tyrosine 889.

In terms of assembly, monomer. Heterodimer of alpha- and beta-dystroglycan subunits which are the central components of the dystrophin-glycoprotein complex. This complex then can form a dystrophin-associated glycoprotein complex (DGC) which is composed of three subcomplexes: a cytoplasmic complex comprised of DMD (or UTRN), DTNA and a number of syntrophins, such as SNTB1, SNTB2, SNTG1 and SNTG2, the transmembrane dystroglycan complex, and the sarcoglycan-sarcospan complex. Interacts (via the N-terminal of alphaDAG1) with LARGE1; the interaction enhances laminin binding. Interacts with SGCD. Interacts with AGR2 and AGR3. Interacts (betaDAG1) with DMD; the interaction is inhibited by phosphorylation on the PPXY motif. Interacts (betaDAG1, via its PPXY motif) with UTRN (via its WWW and ZZ domains); the interaction is inhibited by phosphorylation on the PPXY motif. Interacts (betaDAG1, via its phosphorylated PPXY motif) with the SH2 domain-containing proteins, FYN, CSK, NCK and SHC. Interacts (betaDAG1) with CAV3 (via a central WW-like domain); the interaction disrupts the binding of DMD. BetaDAG1 directly interacts with ANK3, but not with ANK2; this interaction does not interfere with DMD-binding and is required for retention at costameres. Identified in a dystroglycan complex that contains at least PRX, DRP2, UTRN, DMD and DAG1. Interacts with POMGNT1. BetaDAG1 interacts with CD93. O-glycosylated. POMGNT1 catalyzes the initial addition of N-acetylglucosamine, giving rise to the GlcNAc(beta1-2)Man(alpha1-)O-Ser/Thr moiety and thus providing the necessary basis for the addition of further carbohydrate moieties. Heavily O-glycosylated comprising of up to two thirds of its mass and the carbohydrate composition differs depending on tissue type. Mucin-type O-glycosylation is important for ligand binding activity. O-mannosylation is found in high abundance in both brain and muscle where the most abundant glycan is Sia-alpha-2-3-Gal-beta-1-4-Glc-NAc-beta-1-2-Man. In muscle, glycosylation on Thr-314, Thr-316 and Thr-376 by a phosphorylated O-mannosyl glycan with the structure 2-(N-acetylamido)-2-deoxygalactosyl-beta-1,3-2-(N-acetylamido)-2-deoxyglucosyl-beta-1,4-6-phosphomannose is mediated by like-acetylglucosaminyltransferase (LARGE1) protein amd is required for laminin binding. O-glycosylated in the N-terminal region with a core 1 or possibly core 8 glycan. The brain form displays a unique glycosylation pattern which is absent in other tissues; this form shows enhanced binding to laminin LAMA5 compared to the skeletal muscle form. Post-translationally, N-glycosylated. In terms of processing, autolytic cleavage produces the alpha and beta subunits. In cutaneous cells, as well as in certain pathological conditions, shedding of beta-dystroglycan can occur releasing a peptide of about 30 kDa. SRC-mediated phosphorylation of the PPXY motif of the beta subunit recruits SH2 domain-containing proteins, but inhibits binding to WWW domain-containing proteins, DMD and UTRN. This phosphorylation also inhibits nuclear entry.

The protein resides in the secreted. It is found in the extracellular space. The protein localises to the cell membrane. Its subcellular location is the cytoplasm. It localises to the cytoskeleton. The protein resides in the nucleus. It is found in the nucleoplasm. The protein localises to the sarcolemma. Its subcellular location is the postsynaptic cell membrane. The dystroglycan complex is involved in a number of processes including laminin and basement membrane assembly, sarcolemmal stability, cell survival, peripheral nerve myelination, nodal structure, cell migration, and epithelial polarization. In terms of biological role, extracellular peripheral glycoprotein that acts as a receptor for extracellular matrix proteins containing laminin-G domains. Receptor for laminin-2 (LAMA2) and agrin in peripheral nerve Schwann cells. Also acts as a receptor for laminin LAMA5. Functionally, transmembrane protein that plays important roles in connecting the extracellular matrix to the cytoskeleton. Acts as a cell adhesion receptor in both muscle and non-muscle tissues. Receptor for both DMD and UTRN and, through these interactions, scaffolds axin to the cytoskeleton. Also functions in cell adhesion-mediated signaling and implicated in cell polarity. The sequence is that of Dystroglycan 1 from Canis lupus familiaris (Dog).